Reading from the N-terminus, the 126-residue chain is Protein ApaG (126 aa).

One can recognise an ApaG domain in the interval 2 to 126; sequence SALDTSIRVE…FRLATPGLLH (125 aa).

This is Protein ApaG from Shewanella sp. (strain W3-18-1).